Consider the following 505-residue polypeptide: Alpha-1-syntrophin (505 aa).

2 disordered regions span residues 1–24 and 40–75; these read MASGRRAPRTGLLELRAGTGAGAG and LTVSPADGEPGPEPGAVREPEPAQINGAAEPGAAPP. 2 consecutive PH domains span residues 6 to 269 and 293 to 401; these read RAPR…AQIN and DIKQ…DGCH. A compositionally biased stretch (low complexity) spans 9-18; sequence RTGLLELRAG. The region spanning 87–170 is the PDZ domain; sequence RVTVRKADAG…EVVLEVKYMK (84 aa). A phosphoserine mark is found at Ser-101, Ser-184, Ser-189, Ser-193, and Ser-200. A disordered region spans residues 183–212; that stretch reads TSVGWDSPPASPLQRQPSSPGPQTRNLSEA. Positions 195-209 are enriched in polar residues; that stretch reads LQRQPSSPGPQTRNL. An SU domain is found at 449–505; it reads PFEKLQMSSDDGASLLFLDFGGAEGEIQLDLHSCPKTMVFIIHSFLSAKVTRLGLLA. The interval 483-505 is calmodulin-binding; the sequence is PKTMVFIIHSFLSAKVTRLGLLA.

It belongs to the syntrophin family. In terms of assembly, monomer and homodimer. Interacts with the dystrophin related protein DTNA; SGCG of the dystrophin glycoprotein complex; NOS1; GRB2; GA; TGFA; MAPK12 and the sodium channel proteins SCN4A and SCN5A. Interacts with the dystrophin protein DMD in a calmodulin dependent manner and with related protein UTRN; SGCA of the dystrophin glycoprotein complex; F-actin; calmodulin and with the other members of the syntrophin family SNTB1 and SNTB2. Interacts with MYOC; regulates muscle hypertrophy. Interacts with DTNB. Phosphorylated by CaM-kinase II. Phosphorylation may inhibit the interaction with DMD. Highly expressed in skeletal and cardiac muscle and is also detected in brain.

The protein localises to the cell membrane. Its subcellular location is the sarcolemma. It localises to the cell junction. It is found in the cytoplasm. The protein resides in the cytoskeleton. Adapter protein that binds to and probably organizes the subcellular localization of a variety of membrane proteins. May link various receptors to the actin cytoskeleton and the extracellular matrix via dystrophin glycoprotein complex. Plays an important role in synapse formation and in the organization of UTRN and acetylcholine receptors at the neuromuscular synapse. Binds to phosphatidylinositol 4,5-bisphosphate. The protein is Alpha-1-syntrophin (SNTA1) of Oryctolagus cuniculus (Rabbit).